The sequence spans 219 residues: Histone H1.4 (219 aa).

The span at 1-15 shows a compositional bias: low complexity; the sequence is MSETAPAAPAAPAPA. Residues 1–41 are disordered; sequence MSETAPAAPAAPAPAEKTPVKKKARKAAGGAKRKTSGPPVS. Ser-2 bears the N-acetylserine mark. At Ser-2 the chain carries Phosphoserine. N6-acetyllysine is present on Lys-17. A Phosphothreonine modification is found at Thr-18. The span at 20-35 shows a compositional bias: basic residues; it reads VKKKARKAAGGAKRKT. At Lys-26 the chain carries N6-acetyllysine; alternate. Lys-26 carries the N6-methyllysine; alternate modification. Lys-34 is modified (N6-(beta-hydroxybutyryl)lysine; alternate). The residue at position 34 (Lys-34) is an N6-succinyllysine; alternate. Ser-36 is subject to Phosphoserine. The 74-residue stretch at 36–109 folds into the H15 domain; the sequence is SGPPVSELIT…GASGSFKLNK (74 aa). Lys-52 carries the post-translational modification N6-(beta-hydroxybutyryl)lysine. Residue Arg-54 is modified to Citrulline. N6-(beta-hydroxybutyryl)lysine is present on residues Lys-64, Lys-85, Lys-90, and Lys-106. A disordered region spans residues 92–219; it reads TLVQTKGTGA…KPKKTAAKKK (128 aa). Residues 119–140 show a composition bias toward basic residues; the sequence is KAKRAGAAKAKKPAGAAKKPKK. Phosphothreonine is present on Thr-146. 2 stretches are compositionally biased toward basic residues: residues 149-160 and 168-185; these read KSTKKTPKKAKK and KKAK…KKAP. Ser-150 carries the post-translational modification ADP-ribosylserine. Ser-187 is modified (phosphoserine). The span at 192–219 shows a compositional bias: basic residues; that stretch reads KTVKPKAAKPKTSKPKAAKPKKTAAKKK.

Belongs to the histone H1/H5 family. In terms of processing, citrullination at Arg-54 (H1R54ci) by PADI4 takes place within the DNA-binding site of H1 and results in its displacement from chromatin and global chromatin decondensation, thereby promoting pluripotency and stem cell maintenance. ADP-ribosylated on Ser-55, Ser-113 and Ser-150 in response to DNA damage. Post-translationally, H1 histones are progressively phosphorylated during the cell cycle, becoming maximally phosphorylated during late G2 phase and M phase, and being dephosphorylated sharply thereafter. In terms of processing, acetylated at Lys-26. Deacetylated at Lys-26 by SIRT1. Hydroxybutyrylation of histones is induced by starvation.

It localises to the nucleus. The protein resides in the chromosome. In terms of biological role, histone H1 protein binds to linker DNA between nucleosomes forming the macromolecular structure known as the chromatin fiber. Histones H1 are necessary for the condensation of nucleosome chains into higher-order structured fibers. Also acts as a regulator of individual gene transcription through chromatin remodeling, nucleosome spacing and DNA methylation. The chain is Histone H1.4 from Mus musculus (Mouse).